The chain runs to 125 residues: Large ribosomal subunit protein bL12 (125 aa).

This sequence belongs to the bacterial ribosomal protein bL12 family. Homodimer. Part of the ribosomal stalk of the 50S ribosomal subunit. Forms a multimeric L10(L12)X complex, where L10 forms an elongated spine to which 2 to 4 L12 dimers bind in a sequential fashion. Binds GTP-bound translation factors.

Forms part of the ribosomal stalk which helps the ribosome interact with GTP-bound translation factors. Is thus essential for accurate translation. This chain is Large ribosomal subunit protein bL12, found in Rickettsia typhi (strain ATCC VR-144 / Wilmington).